The sequence spans 609 residues: Hemagglutinin/proteinase (609 aa).

An N-terminal signal peptide occupies residues 1-24; that stretch reads MKMIQRPLNWLVLAGAATGFPLYA. A propeptide spanning residues 25–196 is cleaved from the precursor; that stretch reads AQMVTIDDAS…LDQWDGINHA (172 aa). H343 is a binding site for Zn(2+). The active site involves E344. H347 and E367 together coordinate Zn(2+). The active-site Proton donor is the H426.

This sequence belongs to the peptidase M4 family. Zn(2+) serves as cofactor.

It localises to the secreted. May play a role in the pathogenesis of cholera. Hap nicks and activates the A subunit of cholera enterotoxin and related enterotoxins. This is Hemagglutinin/proteinase (hap) from Vibrio cholerae serotype O1 (strain ATCC 39315 / El Tor Inaba N16961).